The sequence spans 63 residues: Large ribosomal subunit protein uL29 (63 aa).

It belongs to the universal ribosomal protein uL29 family.

This is Large ribosomal subunit protein uL29 from Psychromonas ingrahamii (strain DSM 17664 / CCUG 51855 / 37).